The following is a 137-amino-acid chain: MLQPKRTKFRKQMTGHNRGLAQRGSKVSFGEFALKSVSRGRLTARQIEAARRALTRHVKRGGKIWIRVFPDKPVTKKPLEVRMGKGKGSVEYWVAQIQPGKVLYEIEGVSEELAREAFALAAAKLPLATSFVKRTVM.

It belongs to the universal ribosomal protein uL16 family. In terms of assembly, part of the 50S ribosomal subunit.

Functionally, binds 23S rRNA and is also seen to make contacts with the A and possibly P site tRNAs. The sequence is that of Large ribosomal subunit protein uL16 from Stutzerimonas stutzeri (strain A1501) (Pseudomonas stutzeri).